A 197-amino-acid chain; its full sequence is Probable GTP-binding protein EngB (197 aa).

The EngB-type G domain occupies 2–186 (KVKEVIFAGR…KRDLKQYLLS (185 aa)). Residues 10-17 (GRSNVGKS), 35-39 (GTTIR), 52-55 (DLPG), 132-135 (NKMD), and 166-168 (VCA) each bind GTP. Mg(2+) is bound by residues S17 and T37.

It belongs to the TRAFAC class TrmE-Era-EngA-EngB-Septin-like GTPase superfamily. EngB GTPase family. Requires Mg(2+) as cofactor.

Necessary for normal cell division and for the maintenance of normal septation. This is Probable GTP-binding protein EngB from Archaeoglobus fulgidus (strain ATCC 49558 / DSM 4304 / JCM 9628 / NBRC 100126 / VC-16).